Reading from the N-terminus, the 894-residue chain is DNA mismatch repair protein MutS (894 aa).

Position 632–639 (632–639 (GPNMGGKS)) interacts with ATP.

It belongs to the DNA mismatch repair MutS family.

This protein is involved in the repair of mismatches in DNA. It is possible that it carries out the mismatch recognition step. This protein has a weak ATPase activity. The protein is DNA mismatch repair protein MutS of Paraburkholderia phytofirmans (strain DSM 17436 / LMG 22146 / PsJN) (Burkholderia phytofirmans).